The primary structure comprises 489 residues: Serine/threonine-protein kinase BSK2 (489 aa).

The tract at residues 1–30 is disordered; that stretch reads MGCLHSKTANLPSSDDPSAPNKPESVNGDQ. G2 is lipidated: N-myristoyl glycine. Polar residues predominate over residues 7-16; the sequence is KTANLPSSDD. The Protein kinase domain maps to 56–322; it reads SCIVSEGGEK…QEEVASHVLM (267 aa). ATP contacts are provided by residues 62 to 70 and K84; that span reads GGEKAPNVV. D178 serves as the catalytic Proton acceptor.

It belongs to the protein kinase superfamily. Ser/Thr protein kinase family. Phosphorylated by BRI1 upon brassinolide (BL) treatment.

It localises to the cell membrane. It catalyses the reaction L-seryl-[protein] + ATP = O-phospho-L-seryl-[protein] + ADP + H(+). It carries out the reaction L-threonyl-[protein] + ATP = O-phospho-L-threonyl-[protein] + ADP + H(+). In terms of biological role, probable serine/threonine kinase that acts as a positive regulator of brassinosteroid (BR) signaling downstream of the receptor kinase BRI1. Mediates signal transduction from BRI1 by functioning as substrate of BRI1. In Arabidopsis thaliana (Mouse-ear cress), this protein is Serine/threonine-protein kinase BSK2.